Reading from the N-terminus, the 310-residue chain is Small ribosomal subunit biogenesis GTPase RsgA (310 aa).

The 162-residue stretch at Leu77–Phe238 folds into the CP-type G domain. GTP is bound by residues Asn126–Asp129 and Gly180–Thr188. Zn(2+)-binding residues include Cys262, Cys267, His269, and Cys275.

The protein belongs to the TRAFAC class YlqF/YawG GTPase family. RsgA subfamily. In terms of assembly, monomer. Associates with 30S ribosomal subunit, binds 16S rRNA. Zn(2+) serves as cofactor.

It is found in the cytoplasm. One of several proteins that assist in the late maturation steps of the functional core of the 30S ribosomal subunit. Helps release RbfA from mature subunits. May play a role in the assembly of ribosomal proteins into the subunit. Circularly permuted GTPase that catalyzes slow GTP hydrolysis, GTPase activity is stimulated by the 30S ribosomal subunit. This is Small ribosomal subunit biogenesis GTPase RsgA from Bacteroides fragilis (strain YCH46).